The following is a 560-amino-acid chain: Vacuolar protein 8 (560 aa).

Gly-2 carries the N-myristoyl glycine lipid modification. A lipid anchor (S-palmitoyl cysteine) is attached at Cys-4. ARM repeat units lie at residues Asn-39–Ile-76, Thr-77–Val-116, Thr-118–Thr-157, Glu-159–His-198, Asp-200–Val-239, Asn-243–Ser-282, Glu-284–Ile-323, Pro-325–Ala-365, and Asp-409–Ser-448.

This sequence belongs to the beta-catenin family.

It is found in the vacuole membrane. In terms of biological role, functions in both vacuole inheritance and protein targeting from the cytoplasm to vacuole. This chain is Vacuolar protein 8 (VAC8), found in Chaetomium globosum (strain ATCC 6205 / CBS 148.51 / DSM 1962 / NBRC 6347 / NRRL 1970) (Soil fungus).